A 344-amino-acid polypeptide reads, in one-letter code: Phosphate acyltransferase (344 aa).

It belongs to the PlsX family. Homodimer. Probably interacts with PlsY.

The protein resides in the cytoplasm. It catalyses the reaction a fatty acyl-[ACP] + phosphate = an acyl phosphate + holo-[ACP]. The protein operates within lipid metabolism; phospholipid metabolism. Functionally, catalyzes the reversible formation of acyl-phosphate (acyl-PO(4)) from acyl-[acyl-carrier-protein] (acyl-ACP). This enzyme utilizes acyl-ACP as fatty acyl donor, but not acyl-CoA. The polypeptide is Phosphate acyltransferase (Paracidovorax citrulli (strain AAC00-1) (Acidovorax citrulli)).